Consider the following 143-residue polypeptide: Nucleoside diphosphate kinase (143 aa).

ATP is bound by residues Lys11, Phe59, Arg87, Thr93, Arg104, and Asn114. His117 (pros-phosphohistidine intermediate) is an active-site residue.

The protein belongs to the NDK family. In terms of assembly, homotetramer. Mg(2+) is required as a cofactor.

Its subcellular location is the cytoplasm. It catalyses the reaction a 2'-deoxyribonucleoside 5'-diphosphate + ATP = a 2'-deoxyribonucleoside 5'-triphosphate + ADP. The catalysed reaction is a ribonucleoside 5'-diphosphate + ATP = a ribonucleoside 5'-triphosphate + ADP. In terms of biological role, major role in the synthesis of nucleoside triphosphates other than ATP. The ATP gamma phosphate is transferred to the NDP beta phosphate via a ping-pong mechanism, using a phosphorylated active-site intermediate. The protein is Nucleoside diphosphate kinase of Pseudoalteromonas atlantica (strain T6c / ATCC BAA-1087).